The sequence spans 156 residues: Small ribosomal subunit protein uS7 (156 aa).

This sequence belongs to the universal ribosomal protein uS7 family. In terms of assembly, part of the 30S ribosomal subunit. Contacts proteins S9 and S11.

One of the primary rRNA binding proteins, it binds directly to 16S rRNA where it nucleates assembly of the head domain of the 30S subunit. Is located at the subunit interface close to the decoding center, probably blocks exit of the E-site tRNA. In Cronobacter sakazakii (strain ATCC BAA-894) (Enterobacter sakazakii), this protein is Small ribosomal subunit protein uS7.